Reading from the N-terminus, the 238-residue chain is 3-deoxy-manno-octulosonate cytidylyltransferase (238 aa).

Belongs to the KdsB family.

It is found in the cytoplasm. The enzyme catalyses 3-deoxy-alpha-D-manno-oct-2-ulosonate + CTP = CMP-3-deoxy-beta-D-manno-octulosonate + diphosphate. The protein operates within nucleotide-sugar biosynthesis; CMP-3-deoxy-D-manno-octulosonate biosynthesis; CMP-3-deoxy-D-manno-octulosonate from 3-deoxy-D-manno-octulosonate and CTP: step 1/1. It participates in bacterial outer membrane biogenesis; lipopolysaccharide biosynthesis. In terms of biological role, activates KDO (a required 8-carbon sugar) for incorporation into bacterial lipopolysaccharide in Gram-negative bacteria. This chain is 3-deoxy-manno-octulosonate cytidylyltransferase, found in Nitratiruptor sp. (strain SB155-2).